The sequence spans 369 residues: sn-glycerol-3-phosphate import ATP-binding protein UgpC (369 aa).

The ABC transporter domain occupies 4–235 (LSLRNVQKTY…PASTFVAGFI (232 aa)). 37–44 (GPSGCGKS) provides a ligand contact to ATP.

It belongs to the ABC transporter superfamily. sn-glycerol-3-phosphate importer (TC 3.A.1.1.3) family. The complex is composed of two ATP-binding proteins (UgpC), two transmembrane proteins (UgpA and UgpE) and a solute-binding protein (UgpB).

It is found in the cell inner membrane. It catalyses the reaction sn-glycerol 3-phosphate(out) + ATP + H2O = sn-glycerol 3-phosphate(in) + ADP + phosphate + H(+). Functionally, part of the ABC transporter complex UgpBAEC involved in sn-glycerol-3-phosphate (G3P) import. Responsible for energy coupling to the transport system. This chain is sn-glycerol-3-phosphate import ATP-binding protein UgpC, found in Cupriavidus pinatubonensis (strain JMP 134 / LMG 1197) (Cupriavidus necator (strain JMP 134)).